Consider the following 456-residue polypeptide: Glycerol-3-phosphate acyltransferase 4 (456 aa).

A signal peptide spans 1 to 37 (MFLLLPFDSLIVNLLGISLTVLFTLLLVFIIVPAIFG). The next 2 membrane-spanning stretches (helical) occupy residues 156 to 176 (ISLRLTVLWGLGVLIRYCFLL) and 180 to 200 (IALAFTGISLLVVGTTVVGYL). Residue asparagine 247 is glycosylated (N-linked (GlcNAc...) asparagine). The HXXXXD motif motif lies at 248 to 253 (HTSPID). N-linked (GlcNAc...) asparagine glycans are attached at residues asparagine 327, asparagine 328, and asparagine 362.

The protein belongs to the 1-acyl-sn-glycerol-3-phosphate acyltransferase family. In terms of tissue distribution, ubiquitous. High levels in testis. Relatively high level of expression in skeletal muscle and heart. Relatively low level of expression in lung.

Its subcellular location is the endoplasmic reticulum membrane. It catalyses the reaction sn-glycerol 3-phosphate + an acyl-CoA = a 1-acyl-sn-glycero-3-phosphate + CoA. The enzyme catalyses dodecanoyl-CoA + sn-glycerol 3-phosphate = 1-dodecanoyl-sn-glycerol 3-phosphate + CoA. The catalysed reaction is sn-glycerol 3-phosphate + hexadecanoyl-CoA = 1-hexadecanoyl-sn-glycero-3-phosphate + CoA. It carries out the reaction sn-glycerol 3-phosphate + octadecanoyl-CoA = 1-octadecanoyl-sn-glycero-3-phosphate + CoA. It catalyses the reaction sn-glycerol 3-phosphate + (9Z)-octadecenoyl-CoA = 1-(9Z-octadecenoyl)-sn-glycero-3-phosphate + CoA. The enzyme catalyses (9Z,12Z)-octadecadienoyl-CoA + sn-glycerol 3-phosphate = 1-(9Z,12Z)-octadecadienoyl-sn-glycero-3-phosphate + CoA. Its pathway is phospholipid metabolism; CDP-diacylglycerol biosynthesis; CDP-diacylglycerol from sn-glycerol 3-phosphate: step 1/3. Inhibited by N-ethylmaleimide (NEM). In terms of biological role, converts glycerol-3-phosphate to 1-acyl-sn-glycerol-3-phosphate (lysophosphatidic acid or LPA) by incorporating an acyl moiety at the sn-1 position of the glycerol backbone. Active against both saturated and unsaturated long-chain fatty acyl-CoAs. Protects cells against lipotoxicity. The polypeptide is Glycerol-3-phosphate acyltransferase 4 (Homo sapiens (Human)).